Here is a 220-residue protein sequence, read N- to C-terminus: Transcriptional regulatory protein LnrK (220 aa).

In terms of domain architecture, Response regulatory spans 3–119 (KIIITDDQDI…TIVKAVMTVH (117 aa)). Asp-54 is subject to 4-aspartylphosphate. Positions 151–216 (KPNELLDLTE…QAAIYSVRYG (66 aa)) constitute an HTH luxR-type domain. Positions 175 to 194 (NKEIAEKLYITEGTVKNHVS) form a DNA-binding region, H-T-H motif.

Post-translationally, phosphorylated by LnrJ.

It is found in the cytoplasm. In terms of biological role, required for resistance to linearmycins, a family of antibiotic-specialized metabolites produced by some streptomycetes. Member of the two-component regulatory system LnrJ/LnrK, which induces expression of the LnrLMN ABC transporter in response to linearmycins and other polyenes. Probably binds to the promoter region of the lnrLMN operon and directly regulates its expression. May also promote biofilm formation. The protein is Transcriptional regulatory protein LnrK of Bacillus subtilis (strain 168).